The following is a 263-amino-acid chain: uncharacterized protein (263 aa).

Residue 31–38 participates in ATP binding; the sequence is GPTGSGKT.

This sequence belongs to the CbbQ/NirQ/NorQ/GpvN family.

This is an uncharacterized protein from Staphylococcus aureus (strain bovine RF122 / ET3-1).